A 228-amino-acid chain; its full sequence is Cytochrome b6-f complex iron-sulfur subunit 1, chloroplastic (228 aa).

A chloroplast-targeting transit peptide spans methionine 1–methionine 49. Residues leucine 72–valine 92 form a helical membrane-spanning segment. The region spanning alanine 115 to phenylalanine 211 is the Rieske domain. Cysteine 157, histidine 159, cysteine 175, and histidine 178 together coordinate [2Fe-2S] cluster. Residues cysteine 162 and cysteine 177 are joined by a disulfide bond.

This sequence belongs to the Rieske iron-sulfur protein family. As to quaternary structure, the 4 large subunits of the cytochrome b6-f complex are cytochrome b6, subunit IV (17 kDa polypeptide, petD), cytochrome f and the Rieske protein, while the 4 small subunits are petG, petL, petM and petN. The complex functions as a dimer. [2Fe-2S] cluster serves as cofactor.

The protein resides in the plastid. It localises to the chloroplast thylakoid membrane. It carries out the reaction 2 oxidized [plastocyanin] + a plastoquinol + 2 H(+)(in) = 2 reduced [plastocyanin] + a plastoquinone + 4 H(+)(out). In terms of biological role, component of the cytochrome b6-f complex, which mediates electron transfer between photosystem II (PSII) and photosystem I (PSI), cyclic electron flow around PSI, and state transitions. The protein is Cytochrome b6-f complex iron-sulfur subunit 1, chloroplastic (petC1) of Nicotiana tabacum (Common tobacco).